The chain runs to 384 residues: Tetraacyldisaccharide 4'-kinase (384 aa).

Thr72–Thr79 is an ATP binding site.

This sequence belongs to the LpxK family.

The catalysed reaction is a lipid A disaccharide + ATP = a lipid IVA + ADP + H(+). The protein operates within glycolipid biosynthesis; lipid IV(A) biosynthesis; lipid IV(A) from (3R)-3-hydroxytetradecanoyl-[acyl-carrier-protein] and UDP-N-acetyl-alpha-D-glucosamine: step 6/6. Its function is as follows. Transfers the gamma-phosphate of ATP to the 4'-position of a tetraacyldisaccharide 1-phosphate intermediate (termed DS-1-P) to form tetraacyldisaccharide 1,4'-bis-phosphate (lipid IVA). The protein is Tetraacyldisaccharide 4'-kinase of Halothermothrix orenii (strain H 168 / OCM 544 / DSM 9562).